Reading from the N-terminus, the 222-residue chain is Uridine diphosphate glucose pyrophosphatase NUDT14 (222 aa).

The Nudix hydrolase domain maps to 38-206 (KTHDSVTVLL…DIPKTLGVIF (169 aa)). Residues 111–129 (PGLSLEEVACKEAWEECGY) carry the Nudix box motif.

Belongs to the Nudix hydrolase family. In terms of assembly, homodimer. The cofactor is Mg(2+).

It localises to the cytoplasm. It carries out the reaction UDP-sugar + H2O = UMP + alpha-D-aldose 1-phosphate.. Its function is as follows. Hydrolyzes UDP-glucose to glucose 1-phosphate and UMP and ADP-ribose to ribose 5-phosphate and AMP. The physiological substrate is probably UDP-glucose. Poor activity on other substrates such as ADP-glucose, CDP-glucose, GDP-glucose and GDP-mannose. The protein is Uridine diphosphate glucose pyrophosphatase NUDT14 (NUDT14) of Homo sapiens (Human).